A 204-amino-acid chain; its full sequence is Recombination protein RecR (204 aa).

The C4-type zinc finger occupies 57–72 (CPTCFNYTDTDICRYC). Positions 80–181 (ESICVVEEPS…KLSRIAHGVP (102 aa)) constitute a Toprim domain.

This sequence belongs to the RecR family.

In terms of biological role, may play a role in DNA repair. It seems to be involved in an RecBC-independent recombinational process of DNA repair. It may act with RecF and RecO. In Bdellovibrio bacteriovorus (strain ATCC 15356 / DSM 50701 / NCIMB 9529 / HD100), this protein is Recombination protein RecR.